Here is a 462-residue protein sequence, read N- to C-terminus: Microspherule protein 1 (462 aa).

Methionine 1 is subject to N-acetylmethionine. Residues 1 to 130 (MDKDSQGLLD…KSKQPLQVTK (130 aa)) form a disordered region. Residue serine 22 is modified to Phosphoserine. Over residues 43–55 (PKRRSSSRFIKRK) the composition is skewed to basic residues. Residues 81–90 (SGRCSGSEPS) show a composition bias toward low complexity. Position 102 is a phosphoserine (serine 102). Threonine 103 bears the Phosphothreonine mark. Pro residues predominate over residues 103–112 (TPVPPSPAPT). Serine 108 bears the Phosphoserine mark. The Nuclear localization signal motif lies at 113-123 (PGLTKRVKKSK). Lysine 123 and lysine 130 each carry N6-acetyllysine. Serine 282 bears the Phosphoserine mark. Residues 301–335 (LEHELTVADRRQKREIRQLEQELHKWQVLVDSITG) are a coiled coil. Positions 363-419 (ITLGRATKDNQIDVDLSLEGPAWKISRKQGVIKLKNNGDFFIANEGRRPIYIDGRPV) constitute an FHA domain. The short motif at 389 to 396 (RKQGVIKL) is the UBR5-degron element.

In terms of assembly, component of the chromatin remodeling INO80 complex; specifically part of a complex module associated with the N-terminus of INO80. Component of some MLL1/MLL complex, at least composed of the core components KMT2A/MLL1, ASH2L, HCFC1, WDR5 and RBBP5, as well as the facultative components BACC1, CHD8, E2F6, HSP70, INO80C, KANSL1, LAS1L, MAX, MCRS1, MGA, KAT8/MOF, PELP1, PHF20, PRP31, RING2, RUVB1/TIP49A, RUVB2/TIP49B, SENP3, TAF1, TAF4, TAF6, TAF7, TAF9 and TEX10. Component of the NSL complex at least composed of MOF/KAT8, KANSL1, KANSL2, KANSL3, MCRS1, PHF20, OGT1/OGT, WDR5 and HCFC1. Interacts with NOP2. Interacts with PINX1. Interacts with TERT. Interacts with CCDC85B. Interacts with DAXX. Interacts (via N-terminus) with FMR1 (via phosphorylated form). Interacts with FXR1 and FXR2. Interacts (via C-terminus) with NDE1 (via C-terminus); phosphorylation of NDE1 inhibits the interaction. Interacts (via C-terminus) with ZNF375. Interacts (via C-terminus) with active GTP-bound RHEB (via N-terminus) under conditions of high amino acid concentration; the interaction promotes mTORC1 complex activation by RHEB. Interacts (via N-terminus) with the mTORC1 complex; the interaction ensures mTORC1 activation by RHEB. Interacts with DYNC1I1; the interaction is required for the proper distribution of centriolar satellites. Interacts with TTBK2; the interaction is required for recruitment of TTBK2 to the mother centriole. Interacts with KIF2A; the interaction occurs during mitosis and facilitates chromosome alignment. Post-translationally, ubiquitinated by UBR5 when not assembled in the INO80 complex, leading to its degradation: UBR5 recognizes and binds a degron that is not accessible when MCRS1 is part of the INO80 complex. In terms of processing, phosphorylated by AURKA on Ser-35 and/or Ser-36 during mitosis which is required for kinetochore fiber assembly and mitotic progression but not for spindle localization or for chromosome-induced microtuble aster formation. Also phosphorylated by AURKA on Ser-85 and/or Ser-87. Phosphorylated by TTK/MPS1 which enhances recruitment of KIF2A to the minus end of spindle microtubules and facilitates precise chromosome segregation.

The protein localises to the nucleus. It localises to the nucleolus. It is found in the cytoplasm. The protein resides in the cytoskeleton. Its subcellular location is the microtubule organizing center. The protein localises to the centrosome. It localises to the spindle pole. It is found in the chromosome. The protein resides in the centromere. Its subcellular location is the kinetochore. The protein localises to the lysosome. It localises to the centriolar satellite. Functionally, modulates the transcription repressor activity of DAXX by recruiting it to the nucleolus. As part of the NSL complex it may be involved in acetylation of nucleosomal histone H4 on several lysine residues. Putative regulatory component of the chromatin remodeling INO80 complex which is involved in transcriptional regulation, DNA replication and probably DNA repair. May also be an inhibitor of TERT telomerase activity. Binds to G-quadruplex structures in mRNA. Binds to RNA homomer poly(G) and poly(U). Maintains RHEB at the lysosome in its active GTP-bound form and prevents its interaction with the mTORC1 complex inhibitor TSC2, ensuring activation of the mTORC1 complex by RHEB. Stabilizes the minus ends of kinetochore fibers by protecting them from depolymerization, ensuring functional spindle assembly during mitosis. Following phosphorylation by TTK/MPS1, enhances recruitment of KIF2A to the minus ends of mitotic spindle microtubules which promotes chromosome alignment. Regulates the morphology of microtubule minus ends in mitotic spindle by maintaining them in a closed conformation characterized by the presence of an electron-dense cap. Regulates G2/M transition and spindle assembly during oocyte meiosis. Mediates histone modifications and transcriptional regulation in germinal vesicle oocytes which are required for meiotic progression. Also regulates microtubule nucleation and spindle assembly by activating aurora kinases during oocyte meiosis. Contributes to the establishment of centriolar satellites and also plays a role in primary cilium formation by recruiting TTBK2 to the mother centriole which is necessary for removal of the CP110 cap from the mother centriole, an early step in ciliogenesis. Required for epiblast development during early embryogenesis. Essential for cell viability. The polypeptide is Microspherule protein 1 (Mcrs1) (Mus musculus (Mouse)).